The primary structure comprises 162 residues: Lipoprotein signal peptidase (162 aa).

3 helical membrane passes run 12-32 (WLWLVVVVLIIDLGSKYLILQ), 70-90 (WFFAGIAIGICVILMVMMYRS), and 102-122 (ALIIGGALGNLFDRLWHGFVV). Residues Asp123 and Asp141 contribute to the active site. Residues 137 to 157 (FNLADSAICIGAALIVLEGFL) traverse the membrane as a helical segment.

It belongs to the peptidase A8 family.

Its subcellular location is the cell inner membrane. The enzyme catalyses Release of signal peptides from bacterial membrane prolipoproteins. Hydrolyzes -Xaa-Yaa-Zaa-|-(S,diacylglyceryl)Cys-, in which Xaa is hydrophobic (preferably Leu), and Yaa (Ala or Ser) and Zaa (Gly or Ala) have small, neutral side chains.. Its pathway is protein modification; lipoprotein biosynthesis (signal peptide cleavage). This protein specifically catalyzes the removal of signal peptides from prolipoproteins. In Citrobacter koseri (strain ATCC BAA-895 / CDC 4225-83 / SGSC4696), this protein is Lipoprotein signal peptidase.